The following is a 153-amino-acid chain: Transcriptional repressor NrdR (153 aa).

The segment at 3 to 34 (CPFCNNISTNVKDSRSIEDDMLIRRRRVCPVC) is a zinc-finger region. The 91-residue stretch at 49–139 (LMVIKKNGGL…VYMNFKNIND (91 aa)) folds into the ATP-cone domain.

Belongs to the NrdR family. Requires Zn(2+) as cofactor.

Functionally, negatively regulates transcription of bacterial ribonucleotide reductase nrd genes and operons by binding to NrdR-boxes. The polypeptide is Transcriptional repressor NrdR (Ehrlichia ruminantium (strain Gardel)).